A 231-amino-acid polypeptide reads, in one-letter code: Protein OPG061 (231 aa).

Belongs to the orthopoxvirus OPG058 family.

It is found in the host nucleus. It localises to the host nucleolus. The chain is Protein OPG061 (OPG061) from Variola virus.